The chain runs to 379 residues: Cytochrome b (379 aa).

The next 4 membrane-spanning stretches (helical) occupy residues 33–53, 77–98, 113–133, and 178–198; these read FGSL…FLAM, WTIR…FIHV, WNVG…GYVL, and FFAL…IHLL. Residues His-83 and His-97 each contribute to the heme b site. 2 residues coordinate heme b: His-182 and His-196. His-201 contributes to the a ubiquinone binding site. 4 consecutive transmembrane segments (helical) span residues 226–246, 288–308, 320–340, and 347–367; these read TKDF…ALFY, LGGV…PFLQ, LSQF…WIGG, and FINI…FIMP.

It belongs to the cytochrome b family. The cytochrome bc1 complex contains 11 subunits: 3 respiratory subunits (MT-CYB, CYC1 and UQCRFS1), 2 core proteins (UQCRC1 and UQCRC2) and 6 low-molecular weight proteins (UQCRH/QCR6, UQCRB/QCR7, UQCRQ/QCR8, UQCR10/QCR9, UQCR11/QCR10 and a cleavage product of UQCRFS1). This cytochrome bc1 complex then forms a dimer. Heme b serves as cofactor.

The protein localises to the mitochondrion inner membrane. In terms of biological role, component of the ubiquinol-cytochrome c reductase complex (complex III or cytochrome b-c1 complex) that is part of the mitochondrial respiratory chain. The b-c1 complex mediates electron transfer from ubiquinol to cytochrome c. Contributes to the generation of a proton gradient across the mitochondrial membrane that is then used for ATP synthesis. The protein is Cytochrome b (MT-CYB) of Lepilemur sahamalazensis (Sahamalaza sportive lemur).